A 215-amino-acid polypeptide reads, in one-letter code: Cytochrome b6 (215 aa).

A helical membrane pass occupies residues 32-52 (IFYCLGGITFTLFLVQVATGF). Residue Cys-35 coordinates heme c. Heme b-binding residues include His-86 and His-100. 3 helical membrane passes run 90 to 110 (ASMMVLSMILHVCRVYLTGGF), 116 to 136 (LTWITGVIMAVCTVSFGVTGY), and 186 to 206 (LHTFVLPLLTVVFMLAHFLMI). Residues His-187 and His-202 each coordinate heme b.

Belongs to the cytochrome b family. PetB subfamily. As to quaternary structure, the 4 large subunits of the cytochrome b6-f complex are cytochrome b6, subunit IV (17 kDa polypeptide, PetD), cytochrome f and the Rieske protein, while the 4 small subunits are PetG, PetL, PetM and PetN. The complex functions as a dimer. It depends on heme b as a cofactor. Heme c is required as a cofactor.

The protein localises to the plastid. The protein resides in the chloroplast thylakoid membrane. In terms of biological role, component of the cytochrome b6-f complex, which mediates electron transfer between photosystem II (PSII) and photosystem I (PSI), cyclic electron flow around PSI, and state transitions. The chain is Cytochrome b6 from Tupiella akineta (Green alga).